A 103-amino-acid chain; its full sequence is Serine rich endogenous peptide 9 (103 aa).

Positions 1 to 25 (MENIFFSKLTQVFIVALLCIFIYRT) are cleaved as a signal peptide. The interval 54–103 (IYVKPPPLKSKDSNQKGKRGETYYKPNSEIGTGPSHSGHGGSSIEHVSSP) is disordered. The span at 62–75 (KSKDSNQKGKRGET) shows a compositional bias: basic and acidic residues. The SCOOP motif signature appears at 82–96 (EIGTGPSHSGHGGSS). A compositionally biased stretch (low complexity) spans 84–103 (GTGPSHSGHGGSSIEHVSSP). Positions 88–90 (SHS) match the SxS motif essential for MIK2 binding motif.

Belongs to the serine rich endogenous peptide (SCOOP) phytocytokine family. In terms of assembly, interacts with MIK2 (via extracellular leucine-rich repeat domain); this interaction triggers the formation of complex between MIK2 and the BAK1/SERK3 and SERK4 coreceptors, and subsequent BAK1 activation by phosphorylation. Mostly expressed in seedlings shoots and roots, and, to a lower extent, in leaves, but barely in flowers.

It is found in the cell membrane. The protein resides in the secreted. The protein localises to the extracellular space. Its subcellular location is the apoplast. In terms of biological role, brassicaceae-specific phytocytokine (plant endogenous peptide released into the apoplast) perceived by MIK2 in a BAK1/SERK3 and SERK4 coreceptors-dependent manner, that modulates various physiological and antimicrobial processes including growth prevention and reactive oxygen species (ROS) response regulation. The protein is Serine rich endogenous peptide 9 of Arabidopsis thaliana (Mouse-ear cress).